We begin with the raw amino-acid sequence, 172 residues long: MFDIGWSELLVIGVVALIAIGPKELPGVLRMVGQWMGKARKMASEFQGQFNEAMREAEMADLKKSFDDIKATANTFSRDNIMTSLQKDVDAAMTIDKIEHIDTSPVEPTTPEPPTAETLLEAETHAASISAATAVTEVGEPLAITQEIHPALPSPEPAAAIAIAPIKDAKAS.

A helical membrane pass occupies residues 1-21 (MFDIGWSELLVIGVVALIAIG).

This sequence belongs to the TatB family. As to quaternary structure, the Tat system comprises two distinct complexes: a TatABC complex, containing multiple copies of TatA, TatB and TatC subunits, and a separate TatA complex, containing only TatA subunits. Substrates initially bind to the TatABC complex, which probably triggers association of the separate TatA complex to form the active translocon.

It localises to the cell inner membrane. Its function is as follows. Part of the twin-arginine translocation (Tat) system that transports large folded proteins containing a characteristic twin-arginine motif in their signal peptide across membranes. Together with TatC, TatB is part of a receptor directly interacting with Tat signal peptides. TatB may form an oligomeric binding site that transiently accommodates folded Tat precursor proteins before their translocation. The sequence is that of Sec-independent protein translocase protein TatB from Rhodopseudomonas palustris (strain BisB18).